The sequence spans 119 residues: uncharacterized protein (119 aa).

A coiled-coil region spans residues 63–104; the sequence is KKIKKELESNSEKRKAALQMIKEEHTAKVDRYKMIIEDLRQQ.

This is an uncharacterized protein from Bacillus subtilis (strain 168).